A 296-amino-acid polypeptide reads, in one-letter code: Myeloid differentiation primary response protein MyD88 (296 aa).

Residues 54–109 (MGFEYLEIRELETRPDPTRSLLDAWQGRSGASVGRLLELLALLDREDILKELKSRI) form the Death domain. The segment at 110–155 (EEDCQKYLGKQQNQESEKPLQVARVESSVPQTKELGGITTLDDPLG) is intermediate domain. Positions 159–293 (ELFDAFICYC…WFWTRLAKAL (135 aa)) constitute a TIR domain. The residue at position 244 (serine 244) is a Phosphoserine.

As to quaternary structure, homodimer. Also forms heterodimers with TIRAP. Binds to TLR2, TLR4, IRAK1, IRAK2 and IRAK4 via their respective TIR domains. Interacts with IL18R1. Interacts with BMX, IL1RL1, IKBKE and IRF7. Interacts with LRRFIP1 and LRRFIP2; this interaction positively regulates Toll-like receptor (TLR) signaling in response to agonist. Interacts with FLII. LRRFIP1 and LRRFIP2 compete with FLII for MYD88-binding. Interacts with IRF1. Upon IL1B treatment, forms a complex with PELI1, IRAK1, IRAK4 and TRAF6; this complex recruits MAP3K7/TAK1, TAB1 and TAB2 to mediate NF-kappa-B activation. Direct binding of SMAD6 to PELI1 prevents the complex formation and hence negatively regulates IL1R-TLR signaling and eventually NF-kappa-B-mediated gene expression. May interact with PIK3AP1. Interacts (via TIR domain) with DHX9 (via H2A and OB-fold regions); this interaction is direct. Interacts with OTUD4 deubiquitinase; the interaction is direct. Post-translationally, ubiquitinated; undergoes 'Lys-63'-linked polyubiquitination. OTUD4 specifically hydrolyzes 'Lys-63'-linked polyubiquitinated MYD88. Deubiquitinated by USP3 that cleaves 'Lys-63'-linked ubiquitin chains leading to inhibition of MYD88-induced NF-kappa-B signaling. As to expression, detected in bone marrow. Isoform 1 is expressed in testis, kidney, lung, ovary, adrenal gland, provstate, thymus and heart, and weakly in skeletal muscle, liver, spleen and brain. Isoform 2 is mainly expressed in the spleen and weakly in brain.

It localises to the cytoplasm. The protein resides in the nucleus. In terms of biological role, adapter protein involved in the Toll-like receptor and IL-1 receptor signaling pathway in the innate immune response. Acts via IRAK1, IRAK2, IRF7 and TRAF6, leading to NF-kappa-B activation, cytokine secretion and the inflammatory response. Increases IL-8 transcription. Involved in IL-18-mediated signaling pathway. Activates IRF1 resulting in its rapid migration into the nucleus to mediate an efficient induction of IFN-beta, NOS2/INOS, and IL12A genes. Upon TLR8 activation by GU-rich single-stranded RNA (GU-rich RNA) derived from viruses, induces IL1B release through NLRP3 inflammasome activation. MyD88-mediated signaling in intestinal epithelial cells is crucial for maintenance of gut homeostasis and controls the expression of the antimicrobial lectin REG3G in the small intestine. Mediates leukocyte recruitment at the inflammatory site. Its function is as follows. Defective in its ability to induce IRAK phosphorylation and NF-kappa-B activation and can function as a negative regulator of activation by IL-1 or lipopolysaccharide (LPS). This is Myeloid differentiation primary response protein MyD88 from Mus musculus (Mouse).